The chain runs to 347 residues: Sensor protein VraS (347 aa).

The next 2 helical transmembrane spans lie at Ile-13–Ile-33 and Ile-43–Val-63. The Histidine kinase domain occupies Arg-150–Lys-341. Residue His-156 is modified to Phosphohistidine.

In terms of processing, autophosphorylated on His-156.

Its subcellular location is the cell membrane. It carries out the reaction ATP + protein L-histidine = ADP + protein N-phospho-L-histidine.. In terms of biological role, member of the two-component regulatory system PprA/PprB involved in biofilm formation by controlling the expression of many related genes including type IVb pili major subunit flp pilin, adhesin bapA or cupE fimbriae. Also modulates quorum-sensing signal production acting on both negative and positive modulators. Functions as a heme sensor histidine kinase which is autophosphorylated at a histidine residue and transfers its phosphate group to PprB. This is Sensor protein VraS (vraS) from Staphylococcus aureus (strain Mu3 / ATCC 700698).